Reading from the N-terminus, the 634-residue chain is Ankyrin repeat and SOCS box protein 2 (634 aa).

Positions 26–45 constitute a UIM domain; sequence SEEELVQMAIEQSLADKTRG. Residues 35-81 form a disordered region; it reads IEQSLADKTRGPTPAETSVSSQTNHQPGHIHPWTRSSSPPESPPARA. Positions 49 to 60 are enriched in polar residues; it reads AETSVSSQTNHQ. ANK repeat units lie at residues 104-133, 137-167, 171-200, 204-233, 237-266, 270-299, 303-332, 336-365, 368-397, 410-439, 440-469, and 476-504; these read AAMD…NLAE, EGWL…TIDQ, QEET…EPDI, SRET…DANH, RGWT…KVEA, YSIT…DINT, DSAS…DANK, DGLL…RTRV, SGIS…DVNT, RRTS…DPNR, DVIS…NIDA, and TAFP…DGEP. Ser-371 is modified (phosphoserine). Residues 580–634 enclose the SOCS box domain; that stretch reads EDWAVIKEKAEPPRPLAHLCRLRVRKAIGKYRIKLLDTLPLPGRLIRYLKYENTQ.

It belongs to the ankyrin SOCS box (ASB) family. In terms of assembly, component of a probable ECS E3 ubiquitin-protein ligase complex which contains CUL5, either RBX1 or RNF7/RBX2, Elongin BC complex (ELOB and ELOC) and ASB2. Interacts with SKP2. Through its interaction with SKP2, likely to bridge the formation of dimeric E3-ubiquitin-protein ligase complexes composed of an ECS complex and an SCF(SKP2) complex. Interacts with JAK2; the interaction targets JAK2 for Notch-mediated proteasomal degradation. Interacts with TCF3/E2A; the interaction is mediated by SKP2 and targets TCF3 for Notch-mediated proteasomal degradation. Interacts with DES. Monoubiquitinated.

The protein localises to the cytoplasm. It localises to the cytoskeleton. Its subcellular location is the stress fiber. It is found in the myofibril. The protein resides in the sarcomere. The protein localises to the z line. It functions in the pathway protein modification; protein ubiquitination. Substrate-recognition component of a SCF-like ECS (Elongin-Cullin-SOCS-box protein) E3 ubiquitin-protein ligase complex which mediates the ubiquitination and subsequent proteasomal degradation of target proteins. Mediates Notch-induced ubiquitination and degradation of substrates including E2A and JAK2. Required during embryonic heart development for complete heart looping. Required for cardiomyocyte differentiation. Involved in myogenic differentiation and targets filamin FLNB for proteasomal degradation but not filamin FLNA. Also targets DES for proteasomal degradation. Acts as a negative regulator of skeletal muscle mass. The polypeptide is Ankyrin repeat and SOCS box protein 2 (Rattus norvegicus (Rat)).